Consider the following 495-residue polypeptide: MEKKKGELKSIFLPFLSTSHIIPLVDMARLFALHDVDVTIITTAHNATVFQKSIDLDASRGRPIRTHVVNFPAAQVGLPVGIEAFNVDTPREMTPRIYMGLSLLQQVFEKLFHDLQPDFIVTDMFHPWSVDAAAKLGIPRIMFHGASYLARSAAHSVEQYAPHLEAKFDTDKFVLPGLPDNLEMTRLQLPDWLRSPNQYTELMRTIKQSEKKSYGSLFNSFYDLESAYYEHYKSIMGTKSWGIGPVSLWANQDAQDKAARGYAKEEEEKEGWLKWLNSKAESSVLYVSFGSINKFPYSQLVEIARALEDSGHDFIWVVRKNDGGEGDNFLEEFEKRMKESNKGYLIWGWAPQLLILENPAIGGLVTHCGWNTVVESVNAGLPMATWPLFAEHFFNEKLVVDVLKIGVPVGAKEWRNWNEFGSEVVKREEIGNAIASLMSEEEEDGGMRKRAKELSVAAKSAIKVGGSSHNNMKELIRELKEIKLSKEAQETAPNP.

An anthocyanidin-binding residues include Thr18 and His20. His20 serves as the catalytic Proton acceptor. Asp123 functions as the Charge relay in the catalytic mechanism. Residues Ser291, Trp349, Ala350, His367, Asn371, Thr372, and Glu375 each contribute to the UDP site. Ala390 provides a ligand contact to an anthocyanidin.

This sequence belongs to the UDP-glycosyltransferase family.

It catalyses the reaction soyasapogenol B 3-O-beta-D-glucuronate + UDP-alpha-D-galactose = soyasaponin III + UDP + H(+). In terms of biological role, glycosyltransferase that transfers a galactosyl group from UDP-galactose to soyasapogenol B monoglucuronide in the biosynthetic pathway for soyasaponins. The chain is Soyasapogenol B glucuronide galactosyltransferase (GmSGT2) from Glycine max (Soybean).